Here is a 494-residue protein sequence, read N- to C-terminus: Truncated non-functional calcium-binding mitochondrial carrier SAL1-1 (494 aa).

Residues glutamine 11–proline 46 form the EF-hand 1 domain. 7 residues coordinate Ca(2+): lysine 65, aspartate 70, aspartate 93, aspartate 95, aspartate 97, lysine 99, and glutamate 104. EF-hand domains are found at residues asparagine 80–glutamine 115, asparagine 120–alanine 155, and serine 156–lysine 191. Ca(2+) contacts are provided by threonine 161 and serine 166. Solcar repeat units lie at residues isoleucine 225 to isoleucine 332 and leucine 345 to methionine 434. Helical transmembrane passes span phenylalanine 231–phenylalanine 248, glycine 307–phenylalanine 326, glycine 355–isoleucine 368, arginine 409–phenylalanine 428, and threonine 458–asparagine 475. One copy of the Solcar 3; truncated repeat lies at serine 452–valine 494.

This sequence belongs to the mitochondrial carrier (TC 2.A.29) family.

Its subcellular location is the mitochondrion inner membrane. In terms of biological role, calcium-dependent mitochondrial solute carrier. The sequence is that of Truncated non-functional calcium-binding mitochondrial carrier SAL1-1 (SAL1) from Saccharomyces cerevisiae (strain ATCC 204508 / S288c) (Baker's yeast).